A 486-amino-acid chain; its full sequence is Hexokinase-2 (486 aa).

Ser-15 is modified (phosphoserine). A Hexokinase domain is found at 21-469 (KELMQQIENF…SGAGAAVIAA (449 aa)). The residue at position 38 (Thr-38) is a Phosphothreonine. Residues 75 to 209 (TGKESGDFLA…NIPIEVVALI (135 aa)) are hexokinase small subdomain. Residues 86–91 (DLGGTN) and Lys-111 each bind ATP. Ser-158 carries the post-translational modification Phosphoserine. Substrate contacts are provided by residues Ser-158, 175–176 (TK), 210–211 (ND), and Asn-237. The tract at residues 210-458 (NDTTGTLVAS…YPIKIVPAED (249 aa)) is hexokinase large subdomain. Phosphoserine is present on Ser-245. Glu-269 contacts substrate. Ser-272 is modified (phosphoserine). Position 302 (Glu-302) interacts with substrate. ATP-binding positions include 307–308 (GY), 344–348 (TSYPA), and 419–423 (SVYNR).

It belongs to the hexokinase family. Homodimer.

The enzyme catalyses a D-hexose + ATP = a D-hexose 6-phosphate + ADP + H(+). It catalyses the reaction D-fructose + ATP = D-fructose 6-phosphate + ADP + H(+). The catalysed reaction is D-glucose + ATP = D-glucose 6-phosphate + ADP + H(+). It functions in the pathway carbohydrate metabolism; hexose metabolism. Its pathway is carbohydrate degradation; glycolysis; D-glyceraldehyde 3-phosphate and glycerone phosphate from D-glucose: step 1/4. Subject to allosteric control. Substrate inhibition by ATP. In terms of biological role, catalyzes the phosphorylation of hexose, such as D-glucose and D-fructose, to hexose 6-phosphate (D-glucose 6-phosphate and D-fructose 6-phosphate, respectively). Mediates the initial step of glycolysis by catalyzing phosphorylation of D-glucose to D-glucose 6-phosphate. This chain is Hexokinase-2 (HXK2), found in Saccharomyces cerevisiae (strain ATCC 204508 / S288c) (Baker's yeast).